The primary structure comprises 640 residues: 1-deoxy-D-xylulose-5-phosphate synthase (640 aa).

Thiamine diphosphate-binding positions include His79 and 120-122 (GHS). Asp151 lines the Mg(2+) pocket. Residues 152–153 (GA), Asn180, Tyr287, and Glu369 each bind thiamine diphosphate. Position 180 (Asn180) interacts with Mg(2+).

The protein belongs to the transketolase family. DXPS subfamily. Homodimer. The cofactor is Mg(2+). Requires thiamine diphosphate as cofactor.

The catalysed reaction is D-glyceraldehyde 3-phosphate + pyruvate + H(+) = 1-deoxy-D-xylulose 5-phosphate + CO2. It functions in the pathway metabolic intermediate biosynthesis; 1-deoxy-D-xylulose 5-phosphate biosynthesis; 1-deoxy-D-xylulose 5-phosphate from D-glyceraldehyde 3-phosphate and pyruvate: step 1/1. Functionally, catalyzes the acyloin condensation reaction between C atoms 2 and 3 of pyruvate and glyceraldehyde 3-phosphate to yield 1-deoxy-D-xylulose-5-phosphate (DXP). The protein is 1-deoxy-D-xylulose-5-phosphate synthase of Thioalkalivibrio sulfidiphilus (strain HL-EbGR7).